Here is a 121-residue protein sequence, read N- to C-terminus: Large ribosomal subunit protein bL20 (121 aa).

The protein belongs to the bacterial ribosomal protein bL20 family.

In terms of biological role, binds directly to 23S ribosomal RNA and is necessary for the in vitro assembly process of the 50S ribosomal subunit. It is not involved in the protein synthesizing functions of that subunit. The protein is Large ribosomal subunit protein bL20 of Petrotoga mobilis (strain DSM 10674 / SJ95).